A 207-amino-acid polypeptide reads, in one-letter code: Uracil phosphoribosyltransferase (207 aa).

5-phospho-alpha-D-ribose 1-diphosphate contacts are provided by residues arginine 77, arginine 102, and aspartate 129–serine 137. Uracil contacts are provided by residues isoleucine 192 and glycine 197–alanine 199. Aspartate 198 contributes to the 5-phospho-alpha-D-ribose 1-diphosphate binding site.

This sequence belongs to the UPRTase family. Mg(2+) is required as a cofactor.

The catalysed reaction is UMP + diphosphate = 5-phospho-alpha-D-ribose 1-diphosphate + uracil. Its pathway is pyrimidine metabolism; UMP biosynthesis via salvage pathway; UMP from uracil: step 1/1. Its activity is regulated as follows. Allosterically activated by GTP. Its function is as follows. Catalyzes the conversion of uracil and 5-phospho-alpha-D-ribose 1-diphosphate (PRPP) to UMP and diphosphate. The polypeptide is Uracil phosphoribosyltransferase (Mycoplasma capricolum subsp. capricolum (strain California kid / ATCC 27343 / NCTC 10154)).